Here is a 661-residue protein sequence, read N- to C-terminus: Transketolase (661 aa).

Ser-2 is subject to N-acetylserine. A substrate-binding site is contributed by His-31. Residues His-71 and 119 to 121 each bind thiamine diphosphate; that span reads GPL. Asp-160 is a binding site for Mg(2+). Gly-161 and Asn-190 together coordinate thiamine diphosphate. Residues Asn-190 and Val-192 each contribute to the Mg(2+) site. Positions 267, 359, and 386 each coordinate substrate. A thiamine diphosphate-binding site is contributed by His-267. Glu-413 serves as the catalytic Proton donor. Phe-439 provides a ligand contact to thiamine diphosphate. Residues His-463, Asp-471, and Arg-522 each coordinate substrate.

The protein belongs to the transketolase family. In terms of assembly, homodimer. It depends on Mg(2+) as a cofactor. Ca(2+) serves as cofactor. The cofactor is Mn(2+). Requires Co(2+) as cofactor. Thiamine diphosphate is required as a cofactor.

It carries out the reaction D-sedoheptulose 7-phosphate + D-glyceraldehyde 3-phosphate = aldehydo-D-ribose 5-phosphate + D-xylulose 5-phosphate. In terms of biological role, catalyzes the transfer of a two-carbon ketol group from a ketose donor to an aldose acceptor, via a covalent intermediate with the cofactor thiamine pyrophosphate. The polypeptide is Transketolase (tkt-1) (Dictyostelium discoideum (Social amoeba)).